The sequence spans 209 residues: Inorganic pyrophosphatase (209 aa).

3 residues coordinate substrate: Lys38, Arg52, and Tyr64. Residues Asp92, Asp97, and Asp130 each coordinate Mg(2+). Tyr167 is a binding site for substrate.

Belongs to the PPase family. As to quaternary structure, homohexamer. The cofactor is Mg(2+).

It is found in the cytoplasm. It carries out the reaction diphosphate + H2O = 2 phosphate + H(+). Catalyzes the hydrolysis of inorganic pyrophosphate (PPi) forming two phosphate ions. This is Inorganic pyrophosphatase from Chlamydia trachomatis serovar L2 (strain ATCC VR-902B / DSM 19102 / 434/Bu).